The sequence spans 3712 residues: Laminin subunit alpha (3712 aa).

A signal peptide spans 1-22 (MGHGVASIGALLVILAISYCQA). A Laminin N-terminal domain is found at 23–272 (ELTPPYFNLA…SIKDISIGGR (250 aa)). 2 N-linked (GlcNAc...) asparagine glycosylation sites follow: asparagine 116 and asparagine 219. Disulfide bonds link cysteine 273-cysteine 282, cysteine 275-cysteine 296, cysteine 298-cysteine 307, cysteine 310-cysteine 330, cysteine 333-cysteine 342, cysteine 335-cysteine 367, cysteine 370-cysteine 379, cysteine 382-cysteine 400, cysteine 403-cysteine 414, cysteine 405-cysteine 421, cysteine 423-cysteine 432, cysteine 435-cysteine 445, cysteine 448-cysteine 460, cysteine 450-cysteine 468, cysteine 470-cysteine 479, cysteine 482-cysteine 492, cysteine 495-cysteine 507, cysteine 497-cysteine 514, cysteine 516-cysteine 525, cysteine 528-cysteine 538, cysteine 541-cysteine 553, cysteine 543-cysteine 560, cysteine 562-cysteine 571, cysteine 574-cysteine 584, cysteine 587-cysteine 599, cysteine 589-cysteine 605, cysteine 607-cysteine 616, cysteine 619-cysteine 629, cysteine 632-cysteine 644, cysteine 634-cysteine 650, cysteine 652-cysteine 661, cysteine 664-cysteine 674, cysteine 677-cysteine 691, cysteine 679-cysteine 700, cysteine 702-cysteine 711, cysteine 714-cysteine 729, cysteine 732-cysteine 746, cysteine 734-cysteine 753, cysteine 755-cysteine 764, cysteine 767-cysteine 782, cysteine 785-cysteine 797, cysteine 787-cysteine 804, and cysteine 806-cysteine 815. Laminin EGF-like domains follow at residues 273 to 332 (CMCN…NCEP), 333 to 402 (CNCH…VCSP), 403 to 447 (CQCD…NCRE), 448 to 494 (CECN…ECKA), 495 to 540 (CECN…TCSY), 541 to 586 (CDCD…DCKP), 587 to 631 (CNCS…DCLP), 632 to 676 (CHCD…SCED), 677 to 731 (CNCD…GCEI), and 732 to 784 (CDCW…GCKD). N-linked (GlcNAc...) asparagine glycosylation is present at asparagine 395. N-linked (GlcNAc...) asparagine glycosylation occurs at asparagine 453. N-linked (GlcNAc...) asparagine glycosylation is present at asparagine 508. Asparagine 588 is a glycosylation site (N-linked (GlcNAc...) asparagine). A glycan (N-linked (GlcNAc...) asparagine) is linked at asparagine 722. Residues 785 to 815 (CSCDVGGSWQSVCDKISGQCKCHPRITGLAC) form the Laminin EGF-like 11; truncated domain. The interval 816-1374 (TQPLTTHFFP…TADYNSGALP (559 aa)) is domain IV''. Residues asparagine 897 and asparagine 1352 are each glycosylated (N-linked (GlcNAc...) asparagine). 16 disulfides stabilise this stretch: cysteine 1375–cysteine 1387, cysteine 1377–cysteine 1394, cysteine 1396–cysteine 1405, cysteine 1408–cysteine 1418, cysteine 1421–cysteine 1429, cysteine 1423–cysteine 1436, cysteine 1438–cysteine 1447, cysteine 1450–cysteine 1463, cysteine 1466–cysteine 1480, cysteine 1468–cysteine 1487, cysteine 1489–cysteine 1498, cysteine 1501–cysteine 1511, cysteine 1514–cysteine 1526, cysteine 1516–cysteine 1533, cysteine 1535–cysteine 1544, and cysteine 1547–cysteine 1562. Laminin EGF-like domains are found at residues 1375 to 1420 (CNCD…DCKP), 1421 to 1465 (CKCP…GCEE), 1466 to 1513 (CACN…HCEQ), and 1514 to 1564 (CSCH…GCTT). Asparagine 1484 carries an N-linked (GlcNAc...) asparagine glycan. In terms of domain architecture, Laminin EGF-like 16; first part spans 1565–1574 (CFCFGKTSRC). N-linked (GlcNAc...) asparagine glycosylation is found at asparagine 1583 and asparagine 1617. The region spanning 1585-1775 (SLLKHVSITT…GEYQFLAVER (191 aa)) is the Laminin IV type A domain. The Laminin EGF-like 16; second part domain occupies 1776 to 1808 (CSCPPGYSGHSCEDCAPGYYRDPSGPYGGYCIP). Intrachain disulfides connect cysteine 1778–cysteine 1787, cysteine 1790–cysteine 1806, cysteine 1809–cysteine 1818, cysteine 1811–cysteine 1825, cysteine 1828–cysteine 1837, cysteine 1840–cysteine 1856, cysteine 1859–cysteine 1874, cysteine 1861–cysteine 1885, cysteine 1887–cysteine 1896, cysteine 1899–cysteine 1914, cysteine 1917–cysteine 1931, cysteine 1919–cysteine 1938, cysteine 1941–cysteine 1950, cysteine 1953–cysteine 1967, cysteine 1970–cysteine 1980, cysteine 1972–cysteine 1987, cysteine 1989–cysteine 1998, cysteine 2001–cysteine 2014, cysteine 2017–cysteine 2028, cysteine 2019–cysteine 2035, cysteine 2037–cysteine 2046, cysteine 2049–cysteine 2061, cysteine 2064–cysteine 2076, cysteine 2066–cysteine 2083, cysteine 2085–cysteine 2094, and cysteine 2097–cysteine 2109. Laminin EGF-like domains follow at residues 1809–1858 (CECN…DCMI), 1859–1916 (CACP…VCKP), 1917–1969 (CECS…NCQS), 1970–2016 (CDCD…GCRA), 2017–2063 (CDCG…GCTP), and 2064–2111 (CNCN…GCQE). An N-linked (GlcNAc...) asparagine glycan is attached at asparagine 1847. N-linked (GlcNAc...) asparagine glycosylation occurs at asparagine 1943. An N-linked (GlcNAc...) asparagine glycan is attached at asparagine 2024. A domain II and I region spans residues 2112 to 2671 (CNNCHHALLD…EAARQLANSI (560 aa)). Residues 2178–2249 (KKANSELESD…LSKNLEAAAS (72 aa)) are a coiled coil. N-linked (GlcNAc...) asparagine glycans are attached at residues asparagine 2196, asparagine 2215, asparagine 2267, asparagine 2301, and asparagine 2323. Residues 2301 to 2321 (NKSLNALKNDIGEFSDHLEDL) adopt a coiled-coil conformation. A coiled-coil region spans residues 2376–2450 (DLTLNQINQK…QYTDMTASAE (75 aa)). N-linked (GlcNAc...) asparagine glycans are attached at residues asparagine 2482, asparagine 2524, asparagine 2538, asparagine 2569, asparagine 2699, asparagine 2720, asparagine 2890, asparagine 2938, and asparagine 3010. Positions 2541–2676 (EHQLKDINKL…LANSIKVGVN (136 aa)) form a coiled coil. 3 consecutive Laminin G-like domains span residues 2672 to 2868 (KVGV…ERDV), 2876 to 3048 (VTGL…EEGC), and 3055 to 3223 (VVSY…INGC). A disulfide bond links cysteine 3022 and cysteine 3048. Residue asparagine 3070 is glycosylated (N-linked (GlcNAc...) asparagine). A disulfide bridge links cysteine 3196 with cysteine 3223. The segment at 3244-3297 (NEVESPWSNADTLPPLKPDIESTLPPTTPTTTTTTTTTTTSTTTTSTTTTTTTP) is disordered. Positions 3265 to 3297 (STLPPTTPTTTTTTTTTTTSTTTTSTTTTTTTP) are enriched in low complexity. 2 Laminin G-like domains span residues 3349 to 3528 (GYRF…VVPC) and 3534 to 3709 (RGLF…QGYC). Asparagine 3491 carries an N-linked (GlcNAc...) asparagine glycan. Cysteine 3505 and cysteine 3528 are joined by a disulfide. Asparagine 3612 is a glycosylation site (N-linked (GlcNAc...) asparagine). Cysteine 3682 and cysteine 3709 form a disulfide bridge.

Laminin is a complex glycoprotein, consisting of three different polypeptide chains (alpha, beta, gamma), which are bound to each other by disulfide bonds into a cross-shaped molecule comprising one long and three short arms with globules at each end. In terms of tissue distribution, newly formed mesoderm and later prominently expressed in hemocytes, which also synthesize collagen IV. Expressed in muscles.

Its subcellular location is the secreted. It localises to the extracellular space. It is found in the extracellular matrix. The protein localises to the basement membrane. The protein resides in the synapse. Its subcellular location is the cell projection. It localises to the axon. It is found in the cytoplasmic vesicle. The protein localises to the secretory vesicle. The protein resides in the synaptic vesicle. Functionally, binding to cells via a high affinity receptor, laminin is thought to mediate the attachment, migration and organization of cells into tissues during embryonic development by interacting with other extracellular matrix components. Activates presynaptic signaling involving integrin alpha-PS3/beta-nu and Fak to suppress neuromuscular junction (NMJ) growth during larval development and during low crawling activity, but not during higher-crawling conditions. Mediates, together with integrin alpha-PS3/beta-nu, glutamate receptor-modulated NMJ growth. This Drosophila melanogaster (Fruit fly) protein is Laminin subunit alpha (LanA).